We begin with the raw amino-acid sequence, 360 residues long: D-alanine--D-alanine ligase (360 aa).

The ATP-grasp domain maps to 146 to 352 (KLCVADAGIA…FPELAERLLQ (207 aa)). 179 to 234 (EEKFIYPFFVKPANLGSSIGISKVHHREQLPAALKSACSLDSKIVVEKAITGREIE) is an ATP binding site. Residues D305, E319, and N321 each contribute to the Mg(2+) site.

Belongs to the D-alanine--D-alanine ligase family. It depends on Mg(2+) as a cofactor. Mn(2+) is required as a cofactor.

The protein localises to the cytoplasm. The enzyme catalyses 2 D-alanine + ATP = D-alanyl-D-alanine + ADP + phosphate + H(+). Its pathway is cell wall biogenesis; peptidoglycan biosynthesis. Cell wall formation. This Pelodictyon phaeoclathratiforme (strain DSM 5477 / BU-1) protein is D-alanine--D-alanine ligase.